Reading from the N-terminus, the 630-residue chain is Conserved oligomeric Golgi complex subunit 6 (630 aa).

This sequence belongs to the COG6 family. Component of the conserved oligomeric Golgi complex which is composed of eight different subunits and is required for normal Golgi morphology and localization.

It is found in the golgi apparatus membrane. Required for normal Golgi function. The polypeptide is Conserved oligomeric Golgi complex subunit 6 (Drosophila melanogaster (Fruit fly)).